Reading from the N-terminus, the 118-residue chain is Hydrogenase maturation factor HypA (118 aa).

His2 lines the Ni(2+) pocket. Residues Cys73, Cys76, Cys93, and Cys96 each contribute to the Zn(2+) site.

The protein belongs to the HypA/HybF family.

Its function is as follows. Involved in the maturation of [NiFe] hydrogenases. Required for nickel insertion into the metal center of the hydrogenase. The polypeptide is Hydrogenase maturation factor HypA (Lawsonia intracellularis (strain PHE/MN1-00)).